We begin with the raw amino-acid sequence, 1054 residues long: Disks large-associated protein 2 (1054 aa).

Disordered regions lie at residues 32-87 and 242-301; these read EPEE…SGSR and SHSL…SDDN. Positions 242–255 are enriched in polar residues; that stretch reads SHSLEGSSKSNANG. Positions 267–281 are enriched in basic residues; that stretch reads HAHHAKHSKRSKSKE. Low complexity predominate over residues 289–299; that stretch reads RPGMSSWWSSD. 4 positions are modified to phosphoserine: S298, S304, S386, and S452. 2 disordered regions span residues 442 to 464 and 609 to 666; these read GDEESGESDSSPKTSPKSAILPE and YKKT…TDSL. Residues 628–641 are compositionally biased toward polar residues; that stretch reads VTAQSSTESTQDAY. Phosphoserine is present on residues S662, S665, S668, and S715. Residues 719-746 are disordered; the sequence is QDSEFPEHQPYPRSDVETATDSDTESRG. The residue at position 738 (T738) is a Phosphothreonine. 5 positions are modified to phosphoserine: S740, S771, S806, S978, and S1007. 2 stretches are compositionally biased toward basic and acidic residues: residues 977 to 987 and 1002 to 1020; these read ESPERKEERKV and ITREKSLDLPDRQRQEARR. The interval 977–1021 is disordered; it reads ESPERKEERKVPPPIPKKPPKGKFPITREKSLDLPDRQRQEARRR.

The protein belongs to the SAPAP family. In terms of assembly, interacts with DLG1 and DLG4/PSD-95. As to expression, expressed in brain and kidney.

The protein resides in the cell membrane. The protein localises to the postsynaptic density. It localises to the synapse. Its function is as follows. May play a role in the molecular organization of synapses and neuronal cell signaling. Could be an adapter protein linking ion channel to the subsynaptic cytoskeleton. May induce enrichment of PSD-95/SAP90 at the plasma membrane. This Homo sapiens (Human) protein is Disks large-associated protein 2.